The following is a 1164-amino-acid chain: DNA-directed RNA polymerase 132 kDa polypeptide (1164 aa).

It belongs to the RNA polymerase beta chain family. The DNA-dependent RNA polymerase used for intermediate and late genes expression consists of eight subunits (147) kDa, (133) kDa, (35) kDa, (30) kDa, (22) kDa, (19) kDa, (18) kDa and (7) kDa totalling more than 500 kDa in mass. The same holoenzyme, with the addition of the transcription-specificity factor RAP94, is used for early gene expression.

The protein localises to the virion. It carries out the reaction RNA(n) + a ribonucleoside 5'-triphosphate = RNA(n+1) + diphosphate. Its function is as follows. Part of the DNA-dependent RNA polymerase which catalyzes the transcription of viral DNA into RNA using the four ribonucleoside triphosphates as substrates. Responsible for the transcription of early, intermediate and late genes. DNA-dependent RNA polymerase associates with the early transcription factor (ETF), itself composed of D6 and A7, thereby allowing the early genes transcription. Late transcription, and probably also intermediate transcription, require newly synthesized RNA polymerase. This Oryctolagus cuniculus (Rabbit) protein is DNA-directed RNA polymerase 132 kDa polypeptide (RPO132).